A 183-amino-acid polypeptide reads, in one-letter code: Large ribosomal subunit protein bL32m (183 aa).

A mitochondrion-targeting transit peptide spans M1–L71. 4 residues coordinate Zn(2+): C104, C107, C117, and C120.

The protein belongs to the bacterial ribosomal protein bL32 family. In terms of assembly, component of the mitochondrial large ribosomal subunit (mt-LSU). Mature yeast 74S mitochondrial ribosomes consist of a small (37S) and a large (54S) subunit. The 37S small subunit contains a 15S ribosomal RNA (15S mt-rRNA) and 34 different proteins. The 54S large subunit contains a 21S rRNA (21S mt-rRNA) and 46 different proteins. bL32m has a zinc binding site. MRPL32 precursor is processed by the m-AAA protease (composed of YTA12/RCA1 and YTA10/AFG3), which cleaves the N-terminal transit peptide. Cleavage by the m-AAA protease takes place prior to assembly into the large subunit, an essential step for mitochondrial ribosome (mitoribosome) assembly. Proper processing by the m-AAA protease is dependent on the zinc-binding region within the tightly folded C-terminal domain of MRPL32: zinc-dependent folding halts degradation initiated from the N-terminus and triggers the release of mature MRPL32.

Its subcellular location is the mitochondrion. Its function is as follows. Component of the mitochondrial ribosome (mitoribosome), a dedicated translation machinery responsible for the synthesis of mitochondrial genome-encoded proteins, including at least some of the essential transmembrane subunits of the mitochondrial respiratory chain. The mitoribosomes are attached to the mitochondrial inner membrane and translation products are cotranslationally integrated into the membrane. In Saccharomyces cerevisiae (strain ATCC 204508 / S288c) (Baker's yeast), this protein is Large ribosomal subunit protein bL32m.